We begin with the raw amino-acid sequence, 162 residues long: Peptide methionine sulfoxide reductase MsrA (162 aa).

Residue Cys16 is part of the active site.

Belongs to the MsrA Met sulfoxide reductase family.

It catalyses the reaction L-methionyl-[protein] + [thioredoxin]-disulfide + H2O = L-methionyl-(S)-S-oxide-[protein] + [thioredoxin]-dithiol. The catalysed reaction is [thioredoxin]-disulfide + L-methionine + H2O = L-methionine (S)-S-oxide + [thioredoxin]-dithiol. Its function is as follows. Has an important function as a repair enzyme for proteins that have been inactivated by oxidation. Catalyzes the reversible oxidation-reduction of methionine sulfoxide in proteins to methionine. The protein is Peptide methionine sulfoxide reductase MsrA of Geobacter metallireducens (strain ATCC 53774 / DSM 7210 / GS-15).